The chain runs to 274 residues: Formamidopyrimidine-DNA glycosylase (274 aa).

The Schiff-base intermediate with DNA role is filled by Pro2. Glu3 (proton donor) is an active-site residue. Lys57 serves as the catalytic Proton donor; for beta-elimination activity. Residues His92, Arg111, and Lys152 each coordinate DNA. An FPG-type zinc finger spans residues 237 to 271 (QVYGRKGEECNDCGSIIEAKVIGQRNSFYCPKCQR). The active-site Proton donor; for delta-elimination activity is the Arg261.

Belongs to the FPG family. As to quaternary structure, monomer. Zn(2+) is required as a cofactor.

It carries out the reaction Hydrolysis of DNA containing ring-opened 7-methylguanine residues, releasing 2,6-diamino-4-hydroxy-5-(N-methyl)formamidopyrimidine.. It catalyses the reaction 2'-deoxyribonucleotide-(2'-deoxyribose 5'-phosphate)-2'-deoxyribonucleotide-DNA = a 3'-end 2'-deoxyribonucleotide-(2,3-dehydro-2,3-deoxyribose 5'-phosphate)-DNA + a 5'-end 5'-phospho-2'-deoxyribonucleoside-DNA + H(+). Involved in base excision repair of DNA damaged by oxidation or by mutagenic agents. Acts as a DNA glycosylase that recognizes and removes damaged bases. Has a preference for oxidized purines, such as 7,8-dihydro-8-oxoguanine (8-oxoG). Has AP (apurinic/apyrimidinic) lyase activity and introduces nicks in the DNA strand. Cleaves the DNA backbone by beta-delta elimination to generate a single-strand break at the site of the removed base with both 3'- and 5'-phosphates. The chain is Formamidopyrimidine-DNA glycosylase from Glaesserella parasuis serovar 5 (strain SH0165) (Haemophilus parasuis).